The chain runs to 186 residues: Elongation factor P (186 aa).

Belongs to the elongation factor P family.

The protein localises to the cytoplasm. It participates in protein biosynthesis; polypeptide chain elongation. Involved in peptide bond synthesis. Stimulates efficient translation and peptide-bond synthesis on native or reconstituted 70S ribosomes in vitro. Probably functions indirectly by altering the affinity of the ribosome for aminoacyl-tRNA, thus increasing their reactivity as acceptors for peptidyl transferase. This chain is Elongation factor P, found in Cupriavidus necator (strain ATCC 17699 / DSM 428 / KCTC 22496 / NCIMB 10442 / H16 / Stanier 337) (Ralstonia eutropha).